We begin with the raw amino-acid sequence, 383 residues long: Phosphoenolpyruvate/phosphate translocator 2, chloroplastic (383 aa).

Residues M1–K55 constitute a chloroplast transit peptide. A run of 8 helical transmembrane segments spans residues G76–F96, A108–L128, V143–G163, F179–C199, L210–T232, I253–L273, I299–L319, and V350–S369. One can recognise an EamA domain in the interval Y93–S212.

Belongs to the TPT transporter family. PPT (TC 2.A.7.9) subfamily. In terms of tissue distribution, widely expressed in leaves throughout development. In flowers, expressed in sepals and pistils.

Its subcellular location is the plastid. The protein localises to the chloroplast membrane. In terms of biological role, phosphoenolpyruvate/phosphate translocator that transports phosphoenolpyruvate (PEP), 2-phosphoglycerate and 3-phosphoglycerate. The protein is Phosphoenolpyruvate/phosphate translocator 2, chloroplastic (PPT2) of Arabidopsis thaliana (Mouse-ear cress).